We begin with the raw amino-acid sequence, 249 residues long: Segregation and condensation protein A (249 aa).

The protein belongs to the ScpA family. In terms of assembly, component of a cohesin-like complex composed of ScpA, ScpB and the Smc homodimer, in which ScpA and ScpB bind to the head domain of Smc. The presence of the three proteins is required for the association of the complex with DNA.

The protein localises to the cytoplasm. In terms of biological role, participates in chromosomal partition during cell division. May act via the formation of a condensin-like complex containing Smc and ScpB that pull DNA away from mid-cell into both cell halves. In Listeria innocua serovar 6a (strain ATCC BAA-680 / CLIP 11262), this protein is Segregation and condensation protein A.